The sequence spans 186 residues: MDTFSTKSLALQAQKKLLSKMASKAVVAVLVDDTSSEVLDELYRATREFTRSRKEAQKMLKNLVKVALKLGLLLRGDQLGGEELALLRRFRHRARCLAMTAVSFHQVDFTFDRRVLAAGLLECRDLLHQAVGPHLTAKSHGRINHVFGHLADCDFLAALYGPAEPYRSHLRRICEGLGRMLDEGSL.

Belongs to the TNFAIP8 family. In terms of assembly, interacts with FBXW5; TNFAIP8L1 competes with TSC2 to bind FBXW5 increasing TSC2 stability by preventing its ubiquitination. In terms of tissue distribution, high expression detected in most carcinoma cell lines, especially in cells transformed with virus genomes.

The protein localises to the cytoplasm. Functionally, acts as a negative regulator of mTOR activity. In Homo sapiens (Human), this protein is Tumor necrosis factor alpha-induced protein 8-like protein 1 (TNFAIP8L1).